Here is a 346-residue protein sequence, read N- to C-terminus: Aspartate-semialdehyde dehydrogenase (346 aa).

Residues 12–15 and 40–41 each bind NADP(+); these read SGAV and RS. Arginine 101 is a binding site for phosphate. Cysteine 131 (acyl-thioester intermediate) is an active-site residue. Residue glutamine 158 participates in substrate binding. NADP(+) is bound at residue 161–162; that stretch reads SG. Lysine 225 contributes to the phosphate binding site. Arginine 246 serves as a coordination point for substrate. The active-site Proton acceptor is the histidine 253. Glutamine 326 is an NADP(+) binding site.

Belongs to the aspartate-semialdehyde dehydrogenase family. In terms of assembly, homodimer.

The enzyme catalyses L-aspartate 4-semialdehyde + phosphate + NADP(+) = 4-phospho-L-aspartate + NADPH + H(+). It functions in the pathway amino-acid biosynthesis; L-lysine biosynthesis via DAP pathway; (S)-tetrahydrodipicolinate from L-aspartate: step 2/4. Its pathway is amino-acid biosynthesis; L-methionine biosynthesis via de novo pathway; L-homoserine from L-aspartate: step 2/3. The protein operates within amino-acid biosynthesis; L-threonine biosynthesis; L-threonine from L-aspartate: step 2/5. Its function is as follows. Catalyzes the NADPH-dependent formation of L-aspartate-semialdehyde (L-ASA) by the reductive dephosphorylation of L-aspartyl-4-phosphate. The polypeptide is Aspartate-semialdehyde dehydrogenase (Helicobacter pylori (strain J99 / ATCC 700824) (Campylobacter pylori J99)).